The chain runs to 124 residues: Small ribosomal subunit protein uS12 (124 aa).

Asp89 bears the 3-methylthioaspartic acid mark. The segment at 102–124 (LDTSGVNNRKHGRSKYGTKRPKS) is disordered. Over residues 109–124 (NRKHGRSKYGTKRPKS) the composition is skewed to basic residues.

It belongs to the universal ribosomal protein uS12 family. As to quaternary structure, part of the 30S ribosomal subunit. Contacts proteins S8 and S17. May interact with IF1 in the 30S initiation complex.

With S4 and S5 plays an important role in translational accuracy. Functionally, interacts with and stabilizes bases of the 16S rRNA that are involved in tRNA selection in the A site and with the mRNA backbone. Located at the interface of the 30S and 50S subunits, it traverses the body of the 30S subunit contacting proteins on the other side and probably holding the rRNA structure together. The combined cluster of proteins S8, S12 and S17 appears to hold together the shoulder and platform of the 30S subunit. The sequence is that of Small ribosomal subunit protein uS12 from Francisella tularensis subsp. novicida (strain U112).